A 399-amino-acid chain; its full sequence is Argininosuccinate synthase (399 aa).

8 to 16 (AYSGGLDTS) is a binding site for ATP. Tyr-87 is an L-citrulline binding site. Position 117 (Gly-117) interacts with ATP. Thr-119, Asn-123, and Asp-124 together coordinate L-aspartate. Position 123 (Asn-123) interacts with L-citrulline. L-citrulline contacts are provided by Arg-127, Ser-175, Glu-260, and Tyr-272.

This sequence belongs to the argininosuccinate synthase family. Type 1 subfamily. In terms of assembly, homotetramer.

Its subcellular location is the cytoplasm. The catalysed reaction is L-citrulline + L-aspartate + ATP = 2-(N(omega)-L-arginino)succinate + AMP + diphosphate + H(+). It functions in the pathway amino-acid biosynthesis; L-arginine biosynthesis; L-arginine from L-ornithine and carbamoyl phosphate: step 2/3. The sequence is that of Argininosuccinate synthase from Rhodococcus erythropolis (strain PR4 / NBRC 100887).